A 98-amino-acid polypeptide reads, in one-letter code: NADH-ubiquinone oxidoreductase chain 4L (98 aa).

Transmembrane regions (helical) follow at residues 2–22 (PSIS…MLMF), 29–49 (SLLC…LIIL), and 61–81 (ILLL…LVMV).

It belongs to the complex I subunit 4L family. As to quaternary structure, core subunit of respiratory chain NADH dehydrogenase (Complex I) which is composed of 45 different subunits.

The protein localises to the mitochondrion inner membrane. The catalysed reaction is a ubiquinone + NADH + 5 H(+)(in) = a ubiquinol + NAD(+) + 4 H(+)(out). Its function is as follows. Core subunit of the mitochondrial membrane respiratory chain NADH dehydrogenase (Complex I) which catalyzes electron transfer from NADH through the respiratory chain, using ubiquinone as an electron acceptor. Part of the enzyme membrane arm which is embedded in the lipid bilayer and involved in proton translocation. In Microcebus griseorufus (Gray-brown mouse lemur), this protein is NADH-ubiquinone oxidoreductase chain 4L (MT-ND4L).